A 343-amino-acid chain; its full sequence is Fc receptor-like protein 1 (343 aa).

The signal sequence occupies residues 1 to 16 (MLPWLLLLICALPCEP). Ig-like C2-type domains lie at 17-109 (AGIS…VSIH) and 117-200 (PVLT…EVVA). Residues 17–219 (AGISDVSLKT…PTENGISHLS (203 aa)) are Extracellular-facing. Residue Asn-51 is glycosylated (N-linked (GlcNAc...) asparagine). Cys-138 and Cys-185 are oxidised to a cystine. An N-linked (GlcNAc...) asparagine glycan is attached at Asn-202. The helical transmembrane segment at 220–240 (LGLTGWLLGCLSPITMALIFC) threads the bilayer. The Cytoplasmic segment spans residues 241 to 343 (YWLKRKIGRQ…IAHMDYEDAM (103 aa)). Residues 251-278 (SEDPVRSPPQTVLQGSTYPKSPDSRQPE) are disordered. Positions 258-269 (PPQTVLQGSTYP) are enriched in polar residues. Short sequence motifs (ITIM motif) lie at residues 266–271 (STYPKS), 279–284 (PLYENV), and 291–296 (EVYSLV). Tyr-281 is subject to Phosphotyrosine. Position 297 is a phosphotyrosine (Tyr-297). Short sequence motifs (ITIM motif) lie at residues 325–330 (GLYSKP) and 337–342 (MDYEDA).

As to quaternary structure, interacts with ABL1. Interacts with GRB2 and SOS1. Interacts with SHIP-1/INPP5D. Phosphorylated on C-terminal region upon BCR ligation leading to recruitment of ABL1. As to expression, widely expressed. Expressed in B-cells at the various stages of differentiation.

Its subcellular location is the cell membrane. Functionally, may function as an activating coreceptor in B-cells. May function in B-cells activation and differentiation. The chain is Fc receptor-like protein 1 (Fcrl1) from Mus musculus (Mouse).